Consider the following 315-residue polypeptide: Ectopic P granules protein 4 (315 aa).

6 helical membrane passes run 84–104, 113–133, 146–166, 190–210, 221–241, and 242–262; these read IGFL…FSFF, IGYI…ALWF, LPPP…ISAL, IVYL…FFDG, IFES…LACS, and ISSN…FFII.

Belongs to the EI24 family. In terms of tissue distribution, expressed in pharyngeal and body wall muscles and intestine cells.

The protein resides in the cytoplasm. It is found in the membrane. Involved in autophagy. Thought to act in autophagasome and omegasome formation. The chain is Ectopic P granules protein 4 from Caenorhabditis elegans.